The primary structure comprises 284 residues: RAD52 motif-containing protein 1 (284 aa).

The tract at residues Met1–Lys92 is necessary for nuclear localization and for nucleolar accumulation in response to heat shock. Residues Lys15–Arg98 form the RRM domain. The tract at residues Pro90–Lys133 is necessary for nuclear and nucleolar localization.

Homodimer. In terms of tissue distribution, expressed in testis.

The protein resides in the nucleus. Its subcellular location is the cytoplasm. The protein localises to the nucleolus. It localises to the PML body. It is found in the cajal body. Its function is as follows. May confer resistance to the antitumor agent cisplatin. Binds to DNA and RNA. In Homo sapiens (Human), this protein is RAD52 motif-containing protein 1 (RDM1).